Consider the following 406-residue polypeptide: Putative Bro-N domain-containing protein 019R (406 aa).

Residues leucine 4–glycine 138 form the Bro-N domain. Coiled coils occupy residues glutamine 141–valine 177 and aspartate 343–asparagine 372.

This sequence belongs to the IIV-6 201R/289L family.

This Invertebrate iridescent virus 3 (IIV-3) protein is Putative Bro-N domain-containing protein 019R.